Here is a 183-residue protein sequence, read N- to C-terminus: Adenine phosphoribosyltransferase (183 aa).

It belongs to the purine/pyrimidine phosphoribosyltransferase family. In terms of assembly, homodimer.

The protein resides in the cytoplasm. It carries out the reaction AMP + diphosphate = 5-phospho-alpha-D-ribose 1-diphosphate + adenine. It participates in purine metabolism; AMP biosynthesis via salvage pathway; AMP from adenine: step 1/1. Its function is as follows. Catalyzes a salvage reaction resulting in the formation of AMP, that is energically less costly than de novo synthesis. The sequence is that of Adenine phosphoribosyltransferase from Proteus mirabilis (strain HI4320).